Reading from the N-terminus, the 391-residue chain is Leucine aminopeptidase 1 (391 aa).

The N-terminal stretch at 1–19 (MKLSIALALGATASTGVLA) is a signal peptide. A propeptide spanning residues 20–91 (AVVPQQEPLI…YPTLHAGSYV (72 aa)) is cleaved from the precursor. Asparagine 183 carries an N-linked (GlcNAc...) asparagine glycan. Residues histidine 191 and aspartate 210 each contribute to the Zn(2+) site. A glycan (N-linked (GlcNAc...) asparagine) is linked at asparagine 235. Residues glutamate 249 and aspartate 276 each coordinate Zn(2+). Cysteine 325 and cysteine 329 form a disulfide bridge. A Zn(2+)-binding site is contributed by histidine 358.

The protein belongs to the peptidase M28 family. M28E subfamily. As to quaternary structure, monomer. Zn(2+) serves as cofactor.

The protein resides in the secreted. Extracellular aminopeptidase that allows assimilation of proteinaceous substrates. The protein is Leucine aminopeptidase 1 (lap1) of Aspergillus niger (strain ATCC MYA-4892 / CBS 513.88 / FGSC A1513).